Reading from the N-terminus, the 1023-residue chain is Lon protease homolog (1023 aa).

515–522 (GPPGVGKT) contributes to the ATP binding site. The 194-residue stretch at 810 to 1003 (TNMIGVINGL…IEIITDPNVI (194 aa)) folds into the Lon proteolytic domain. Serine 906 is a catalytic residue.

It belongs to the peptidase S16 family.

The polypeptide is Lon protease homolog (Acanthamoeba polyphaga (Amoeba)).